The sequence spans 98 residues: Citrate lyase acyl carrier protein 1 (98 aa).

At Ser-14 the chain carries O-(phosphoribosyl dephospho-coenzyme A)serine.

It belongs to the CitD family. In terms of assembly, oligomer with a subunit composition of (alpha,beta,gamma)6.

Its subcellular location is the cytoplasm. Its function is as follows. Covalent carrier of the coenzyme of citrate lyase. The chain is Citrate lyase acyl carrier protein 1 from Salmonella paratyphi A (strain ATCC 9150 / SARB42).